Reading from the N-terminus, the 185-residue chain is MGLRHILRIDNPDEKKILTTRCHPVRMPNPSLKQLVADMFETMHAANGVGLAAPQIGVTQRLAVIAIPPMMEERPDGTKVEVAPEQTFVLINPEIVKASDQEDVGLEGCLSLPGWYGEVPRAAWVTVEYTDLNGRRQRIRRATGLLARALQHEIDHLDGVLFTERIRDLSTLKSYSEEEAPATTG.

Residues C109 and H152 each contribute to the Fe cation site. Residue E153 is part of the active site. H156 contacts Fe cation.

It belongs to the polypeptide deformylase family. The cofactor is Fe(2+).

The enzyme catalyses N-terminal N-formyl-L-methionyl-[peptide] + H2O = N-terminal L-methionyl-[peptide] + formate. In terms of biological role, removes the formyl group from the N-terminal Met of newly synthesized proteins. Requires at least a dipeptide for an efficient rate of reaction. N-terminal L-methionine is a prerequisite for activity but the enzyme has broad specificity at other positions. The polypeptide is Peptide deformylase (Roseiflexus castenholzii (strain DSM 13941 / HLO8)).